The sequence spans 297 residues: Protease HtpX homolog (297 aa).

The helical transmembrane segment at 16–36 threads the bilayer; the sequence is IFMAIGFLVGGMAGMILAFVV. Residue His134 participates in Zn(2+) binding. Glu135 is a catalytic residue. His138 serves as a coordination point for Zn(2+). A run of 2 helical transmembrane segments spans residues 147–167 and 175–195; these read MTVT…ALFF and IGSI…QMAI. Glu200 contacts Zn(2+).

The protein belongs to the peptidase M48B family. It depends on Zn(2+) as a cofactor.

Its subcellular location is the cell inner membrane. This is Protease HtpX homolog from Hyphomonas neptunium (strain ATCC 15444).